Reading from the N-terminus, the 653-residue chain is 2-oxoglutarate oxidoreductase subunit KorA (653 aa).

Residues 1-21 (MDPNGSGAGPESHDAAFHAAP) form a disordered region. Residues 11 to 21 (ESHDAAFHAAP) show a composition bias toward basic and acidic residues.

As to quaternary structure, KG oxidoreductase (KOR) is composed of KorA and KorB subunits.

The catalysed reaction is 2 oxidized [2Fe-2S]-[ferredoxin] + 2-oxoglutarate + CoA = succinyl-CoA + 2 reduced [2Fe-2S]-[ferredoxin] + CO2 + H(+). The protein operates within carbohydrate metabolism; tricarboxylic acid cycle. Functionally, component of KG oxidoreductase (KOR) that catalyzes the CoA-dependent oxidative decarboxylation of 2-oxoglutarate (alpha-ketoglutarate, KG) to succinyl-CoA. Methyl viologen can act as electron acceptor in vitro; the physiologic electron acceptor is unknown. Is involved in the alternative TCA pathway that functions concurrently with fatty acid beta-oxidation. Since a growing body of evidence indicates that lipids (for example cholesterol and fatty acids) are a predominant growth substrate for M.tuberculosis during infection, flux through KOR likely represents an important step in intermediary metabolism in vivo. KOR-dependent decarboxylation of KG also appears to be an important source of CO(2) in M.tuberculosis metabolism. This chain is 2-oxoglutarate oxidoreductase subunit KorA (korA), found in Mycobacterium tuberculosis (strain ATCC 25618 / H37Rv).